The following is a 385-amino-acid chain: Signal transduction histidine-protein kinase/phosphatase DegS (385 aa).

The stretch at glutamine 31–glutamine 141 forms a coiled coil. Serine 76 carries the phosphoserine modification. A Histidine kinase domain is found at arginine 183–leucine 385. Histidine 189 is modified (phosphohistidine; by autocatalysis).

In terms of processing, autophosphorylated. Phosphorylated in vitro at Ser-76 by the serine/threonine-protein kinase YbdM, which stimulates the phosphate transfer to DegU.

Its subcellular location is the cytoplasm. It catalyses the reaction ATP + protein L-histidine = ADP + protein N-phospho-L-histidine.. With respect to regulation, regulated via serine phosphorylation of its input domain. Phosphotransfer from DegS to DegU is stimulated by phosphorylation on Ser-76 and by DegQ. Its function is as follows. Member of the two-component regulatory system DegS/DegU, which plays an important role in the transition growth phase. Involved in the control of expression of different cellular functions, including production of degradative enzymes such as the neutral and alkaline proteases, flagellum formation and biofilm formation. Acts both as a protein kinase that undergoes autophosphorylation and subsequently transfers the phosphate to DegU, and as a protein phosphatase that dephosphorylates phospho-DegU. In Bacillus subtilis (strain 168), this protein is Signal transduction histidine-protein kinase/phosphatase DegS (degS).